The chain runs to 495 residues: Serine/threonine protein phosphatase 2A 57 kDa regulatory subunit B' alpha isoform (495 aa).

Basic residues predominate over residues 1–13; the sequence is MFKKIMKGANRKA. Disordered stretches follow at residues 1–61 and 462–495; these read MFKK…AATT and QAKS…MITS. Residues 49–61 are compositionally biased toward polar residues; it reads VPSSPNSMAAATT.

It belongs to the phosphatase 2A regulatory subunit B56 family. PP2A consists of a common heteromeric enzyme, composed of a catalytic subunit (subunits C), a constant regulatory subunit (subunit A), and a variety of regulatory subunits such as subunits B (the R2/B/PR55/B55, R3/B''/PR72/PR130/PR59 and R5/B'/B56 families). Interacts with BZR1. Interacts with BRI1. Interacts with SRK2E/OST1. Expressed ubiquitously, higher levels in leaves.

It is found in the nucleus. It localises to the cytoplasm. Functionally, the B regulatory subunit may modulate substrate selectivity and catalytic activity, and may also direct the localization of the catalytic enzyme to a particular subcellular compartment. Required for the formation of the PP2A holoenzyme that positively regulates brassinosteroid signaling by dephosphorylating and activating BZR1. This chain is Serine/threonine protein phosphatase 2A 57 kDa regulatory subunit B' alpha isoform (B'ALPHA), found in Arabidopsis thaliana (Mouse-ear cress).